Reading from the N-terminus, the 597-residue chain is Probable bifunctional ADP-ribose hydrolase/ADP-ribosyltransferase (597 aa).

The Macro domain occupies 99–299 (SRLIKHGDLG…FYSKLLGPSH (201 aa)). Asp118, Ile119, and Asn133 together coordinate ADP-D-ribose. The Zn(2+) site is built by Cys139, His144, and Cys146. Residues Cys146, Ile147, Asp148, Ser244, Thr245, Gly246, and Phe248 each contribute to the ADP-D-ribose site. The 291-residue stretch at 307–597 (ENTPQGSLSL…IGRAIPLLLE (291 aa)) folds into the Deacetylase sirtuin-type domain. Residues Ala333, 418–421 (SNAD), and Gln438 contribute to the NAD(+) site. Residues Cys446, Cys450, Cys485, and Cys488 each coordinate Zn(2+). Val584 contributes to the NAD(+) binding site.

This sequence in the N-terminal section; belongs to the MacroD-type family. Zn-Macro subfamily. In the C-terminal section; belongs to the sirtuin family. Class M subfamily. In terms of assembly, monomer. Requires Zn(2+) as cofactor.

It carries out the reaction 5-O-(ADP-D-ribosyl)-L-glutamyl-[protein] + H2O = L-glutamyl-[protein] + ADP-D-ribose + H(+). Its function is as follows. Is probably a bifunctional enzyme with ADP-ribosyltransferase and ADP-ribosylhydrolase activities. In vitro, can act as an ADP-ribosylhydrolase that hydrolyzes ADP-ribosyl-glutamate bonds. It can remove the ADP-ribosyl modification from the human mono-ADP-ribosylated PARP1 E988Q mutant, which is primarily modified on glutamate site with only minor aspartate contribution. It cannot hydrolyze the ADP-ribosyl-arpartate bond in ribosylated S.pyogenes GcvH-L. The polypeptide is Probable bifunctional ADP-ribose hydrolase/ADP-ribosyltransferase (Fusarium oxysporum f. sp. cubense).